The primary structure comprises 702 residues: MADS-box MEF2 type transcription factor MIG1 (702 aa).

The 61-residue stretch at 1 to 61 (MGRRKIEIKA…KKLYEYSSGD (61 aa)) folds into the MADS-box domain. 2 disordered regions span residues 73-608 (GGAT…NIDT) and 658-702 (PSFL…KVDS). Over residues 86 to 96 (GGDDDDEEEGD) the composition is skewed to acidic residues. The segment covering 132-144 (ASPPIPNGVPFPP) has biased composition (pro residues). Residues 145 to 155 (HGHGVPRGHTP) show a composition bias toward low complexity. A compositionally biased stretch (polar residues) spans 180–195 (GSPQVNGFGFGQQQSM). Residues 201 to 241 (TTMPPHMPPQMAPGPPFPYPQHPQHPPHPPHPPHPPHPQQP) are compositionally biased toward pro residues. Low complexity-rich tracts occupy residues 273 to 284 (PMGMQRHSVSPP), 326 to 343 (ESPQ…QQPE), and 350 to 371 (EQQQ…QSEP). A compositionally biased stretch (polar residues) spans 456-465 (VDESTSNASE). 2 stretches are compositionally biased toward low complexity: residues 487–512 (RASI…SLRA) and 530–553 (DGSG…DATS). The segment covering 554-567 (QSTRQNDSHSSTNM) has biased composition (polar residues). Residues 587–600 (PPNPFAPKRPPQHP) show a composition bias toward pro residues. Basic and acidic residues predominate over residues 693 to 702 (NEPKRVKVDS).

Belongs to the MEF2 family. In terms of assembly, interacts with MAPK MPS1.

The protein resides in the nucleus. Transcription factor acting downstream of the MPS1 MAP kinase (MAPK) cascade during conidiation and plant infection. Required for overcoming plant defense responses and the differentiation of secondary infectious hyphae in live plant cells. This Pyricularia oryzae (strain 70-15 / ATCC MYA-4617 / FGSC 8958) (Rice blast fungus) protein is MADS-box MEF2 type transcription factor MIG1.